A 120-amino-acid polypeptide reads, in one-letter code: Aspartate 1-decarboxylase (120 aa).

The active-site Schiff-base intermediate with substrate; via pyruvic acid is serine 25. Serine 25 carries the pyruvic acid (Ser) modification. Threonine 57 lines the substrate pocket. Catalysis depends on tyrosine 58, which acts as the Proton donor. Residue 73–75 (GAA) coordinates substrate.

It belongs to the PanD family. Heterooctamer of four alpha and four beta subunits. Pyruvate is required as a cofactor. Is synthesized initially as an inactive proenzyme, which is activated by self-cleavage at a specific serine bond to produce a beta-subunit with a hydroxyl group at its C-terminus and an alpha-subunit with a pyruvoyl group at its N-terminus.

It is found in the cytoplasm. The catalysed reaction is L-aspartate + H(+) = beta-alanine + CO2. It participates in cofactor biosynthesis; (R)-pantothenate biosynthesis; beta-alanine from L-aspartate: step 1/1. In terms of biological role, catalyzes the pyruvoyl-dependent decarboxylation of aspartate to produce beta-alanine. The chain is Aspartate 1-decarboxylase from Deinococcus deserti (strain DSM 17065 / CIP 109153 / LMG 22923 / VCD115).